The chain runs to 436 residues: Trigger factor (436 aa).

Disordered stretches follow at residues 1 to 26 and 81 to 100; these read MQVSVETTEGLGRRMTVQVPAERVEN and QESLRPAGNPHIEPKRTGEG. The PPIase FKBP-type domain occupies 161 to 246; the sequence is EDRVVIDFHG…VKRVEEPQLP (86 aa).

Belongs to the FKBP-type PPIase family. Tig subfamily.

It is found in the cytoplasm. The enzyme catalyses [protein]-peptidylproline (omega=180) = [protein]-peptidylproline (omega=0). Involved in protein export. Acts as a chaperone by maintaining the newly synthesized protein in an open conformation. Functions as a peptidyl-prolyl cis-trans isomerase. This is Trigger factor from Halorhodospira halophila (strain DSM 244 / SL1) (Ectothiorhodospira halophila (strain DSM 244 / SL1)).